Reading from the N-terminus, the 484-residue chain is Protein nucleotidyltransferase YdiU (484 aa).

Positions 81, 83, 84, 103, 115, 116, 166, and 173 each coordinate ATP. The Proton acceptor role is filled by Asp-244. Residues Asn-245 and Asp-254 each coordinate Mg(2+). Residue Asp-254 participates in ATP binding.

The protein belongs to the SELO family. It depends on Mg(2+) as a cofactor. Mn(2+) is required as a cofactor.

It carries out the reaction L-seryl-[protein] + ATP = 3-O-(5'-adenylyl)-L-seryl-[protein] + diphosphate. The enzyme catalyses L-threonyl-[protein] + ATP = 3-O-(5'-adenylyl)-L-threonyl-[protein] + diphosphate. The catalysed reaction is L-tyrosyl-[protein] + ATP = O-(5'-adenylyl)-L-tyrosyl-[protein] + diphosphate. It catalyses the reaction L-histidyl-[protein] + UTP = N(tele)-(5'-uridylyl)-L-histidyl-[protein] + diphosphate. It carries out the reaction L-seryl-[protein] + UTP = O-(5'-uridylyl)-L-seryl-[protein] + diphosphate. The enzyme catalyses L-tyrosyl-[protein] + UTP = O-(5'-uridylyl)-L-tyrosyl-[protein] + diphosphate. Nucleotidyltransferase involved in the post-translational modification of proteins. It can catalyze the addition of adenosine monophosphate (AMP) or uridine monophosphate (UMP) to a protein, resulting in modifications known as AMPylation and UMPylation. The chain is Protein nucleotidyltransferase YdiU from Shewanella loihica (strain ATCC BAA-1088 / PV-4).